Here is a 773-residue protein sequence, read N- to C-terminus: Probable serine/threonine-protein kinase MARK-C (773 aa).

A compositionally biased stretch (polar residues) spans 1 to 27; the sequence is MESNKSSSHGDVSTSPSFLNNHHQFNN. Residues 1–32 are disordered; it reads MESNKSSSHGDVSTSPSFLNNHHQFNNGGDII. A Protein kinase domain is found at 46–300; that stretch reads YEVGKTLGNG…IQELKNHPWT (255 aa). ATP is bound by residues 52-60 and K75; that span reads LGNGTFGKV. Catalysis depends on D171, which acts as the Proton acceptor. The stretch at 362–390 forms a coiled coil; that stretch reads RYASKEVENLKSKLELLSKRKKSFSDKRN. Disordered regions lie at residues 382–445, 462–487, and 558–588; these read KKSF…SQGS, DNDIENSDNNKSSSLTRRSSDPNKDI, and YSIQQQQLQQQQQQQQEQHKEDNNKPNTNLR. Residues 405–443 are compositionally biased toward low complexity; that stretch reads DLSSNNNNNQQQQNSPPSKTNSSSTSSSNRESNNNSPSQ. The stretch at 445-474 forms a coiled coil; it reads SIKEISLDELDNHIEQLDNDIENSDNNKSS. Residues 468–478 show a composition bias toward polar residues; sequence SDNNKSSSLTR. Over residues 561 to 573 the composition is skewed to low complexity; it reads QQQQLQQQQQQQQ. Positions 724–773 constitute a KA1 domain; sequence CFDEDNSVKFQIEIVKICNLDLTGIQLKRLSGDTWKYKDICTELVESMKL.

The protein belongs to the protein kinase superfamily. CAMK Ser/Thr protein kinase family. SNF1 subfamily.

The catalysed reaction is L-seryl-[protein] + ATP = O-phospho-L-seryl-[protein] + ADP + H(+). It carries out the reaction L-threonyl-[protein] + ATP = O-phospho-L-threonyl-[protein] + ADP + H(+). This is Probable serine/threonine-protein kinase MARK-C (mrkC) from Dictyostelium discoideum (Social amoeba).